Here is a 628-residue protein sequence, read N- to C-terminus: tRNA uridine 5-carboxymethylaminomethyl modification enzyme MnmG 1 (628 aa).

11-16 (GAGHAG) serves as a coordination point for FAD. 280–294 (GPRHCPSIDRKVLNF) lines the NAD(+) pocket.

Belongs to the MnmG family. Homodimer. Heterotetramer of two MnmE and two MnmG subunits. Requires FAD as cofactor.

Its subcellular location is the cytoplasm. Its function is as follows. NAD-binding protein involved in the addition of a carboxymethylaminomethyl (cmnm) group at the wobble position (U34) of certain tRNAs, forming tRNA-cmnm(5)s(2)U34. The sequence is that of tRNA uridine 5-carboxymethylaminomethyl modification enzyme MnmG 1 from Fusobacterium nucleatum subsp. nucleatum (strain ATCC 25586 / DSM 15643 / BCRC 10681 / CIP 101130 / JCM 8532 / KCTC 2640 / LMG 13131 / VPI 4355).